Reading from the N-terminus, the 204-residue chain is Holliday junction branch migration complex subunit RuvA (204 aa).

Positions 1–64 are domain I; sequence MIGKLKGTID…EDQLKLFGFM (64 aa). The domain II stretch occupies residues 65–143; the sequence is TALEREWFNL…AFAGEAINIG (79 aa). The interval 144-151 is flexible linker; that stretch reads LKQELGEG. The domain III stretch occupies residues 152 to 204; that stretch reads VAAAPVADAVSALTNLGYSRDQAANAIAAAMKTAGEGADSAKLIRLGLKELAR.

This sequence belongs to the RuvA family. Homotetramer. Forms an RuvA(8)-RuvB(12)-Holliday junction (HJ) complex. HJ DNA is sandwiched between 2 RuvA tetramers; dsDNA enters through RuvA and exits via RuvB. An RuvB hexamer assembles on each DNA strand where it exits the tetramer. Each RuvB hexamer is contacted by two RuvA subunits (via domain III) on 2 adjacent RuvB subunits; this complex drives branch migration. In the full resolvosome a probable DNA-RuvA(4)-RuvB(12)-RuvC(2) complex forms which resolves the HJ.

It localises to the cytoplasm. In terms of biological role, the RuvA-RuvB-RuvC complex processes Holliday junction (HJ) DNA during genetic recombination and DNA repair, while the RuvA-RuvB complex plays an important role in the rescue of blocked DNA replication forks via replication fork reversal (RFR). RuvA specifically binds to HJ cruciform DNA, conferring on it an open structure. The RuvB hexamer acts as an ATP-dependent pump, pulling dsDNA into and through the RuvAB complex. HJ branch migration allows RuvC to scan DNA until it finds its consensus sequence, where it cleaves and resolves the cruciform DNA. In Rhizobium johnstonii (strain DSM 114642 / LMG 32736 / 3841) (Rhizobium leguminosarum bv. viciae), this protein is Holliday junction branch migration complex subunit RuvA.